The primary structure comprises 232 residues: 5'-methylthioadenosine/S-adenosylhomocysteine nucleosidase (232 aa).

Residue E12 is the Proton acceptor of the active site. Substrate-binding positions include G78, I152, and 173–174; that span reads ME. Catalysis depends on D197, which acts as the Proton donor.

It belongs to the PNP/UDP phosphorylase family. MtnN subfamily. As to quaternary structure, homodimer.

It catalyses the reaction S-adenosyl-L-homocysteine + H2O = S-(5-deoxy-D-ribos-5-yl)-L-homocysteine + adenine. The catalysed reaction is S-methyl-5'-thioadenosine + H2O = 5-(methylsulfanyl)-D-ribose + adenine. It carries out the reaction 5'-deoxyadenosine + H2O = 5-deoxy-D-ribose + adenine. It participates in amino-acid biosynthesis; L-methionine biosynthesis via salvage pathway; S-methyl-5-thio-alpha-D-ribose 1-phosphate from S-methyl-5'-thioadenosine (hydrolase route): step 1/2. Its function is as follows. Catalyzes the irreversible cleavage of the glycosidic bond in both 5'-methylthioadenosine (MTA) and S-adenosylhomocysteine (SAH/AdoHcy) to adenine and the corresponding thioribose, 5'-methylthioribose and S-ribosylhomocysteine, respectively. Also cleaves 5'-deoxyadenosine, a toxic by-product of radical S-adenosylmethionine (SAM) enzymes, into 5-deoxyribose and adenine. Thus, is required for in vivo function of the radical SAM enzymes biotin synthase and lipoic acid synthase, that are inhibited by 5'-deoxyadenosine accumulation. The sequence is that of 5'-methylthioadenosine/S-adenosylhomocysteine nucleosidase from Enterobacter sp. (strain 638).